A 242-amino-acid polypeptide reads, in one-letter code: ATP synthase subunit a (242 aa).

A run of 6 helical transmembrane segments spans residues 29–49 (SAVA…IAFV), 83–103 (VFFP…IIGM), 114–134 (IIVT…YGIY), 140–160 (FFSL…MVII), 181–201 (VAGH…TWFF), and 206–226 (IALV…QAYI).

This sequence belongs to the ATPase A chain family. As to quaternary structure, F-type ATPases have 2 components, CF(1) - the catalytic core - and CF(0) - the membrane proton channel. CF(1) has five subunits: alpha(3), beta(3), gamma(1), delta(1), epsilon(1). CF(0) has three main subunits: a(1), b(2) and c(9-12). The alpha and beta chains form an alternating ring which encloses part of the gamma chain. CF(1) is attached to CF(0) by a central stalk formed by the gamma and epsilon chains, while a peripheral stalk is formed by the delta and b chains.

It is found in the cell inner membrane. Functionally, key component of the proton channel; it plays a direct role in the translocation of protons across the membrane. The protein is ATP synthase subunit a of Orientia tsutsugamushi (strain Boryong) (Rickettsia tsutsugamushi).